Consider the following 290-residue polypeptide: Arylamine N-acetyltransferase 2 (290 aa).

The active-site Acyl-thioester intermediate is Cys68. Positions 103 and 104 each coordinate CoA. 106–107 (IH) lines the substrate pocket. Active-site residues include His107 and Asp122. 3 residues coordinate CoA: Tyr208, Thr214, and Ser287.

This sequence belongs to the arylamine N-acetyltransferase family.

The protein localises to the cytoplasm. It catalyses the reaction an arylamine + acetyl-CoA = an N-acetylarylamine + CoA. The catalysed reaction is an N-hydroxyarylamine + acetyl-CoA = an N-acetoxyarylamine + CoA. Its function is as follows. Catalyzes the N- or O-acetylation of various arylamine and heterocyclic amine substrates, and participates in the detoxification of a plethora of hydrazine and arylamine drugs. In Macaca mulatta (Rhesus macaque), this protein is Arylamine N-acetyltransferase 2 (NAT2).